The chain runs to 366 residues: sn-glycerol-3-phosphate import ATP-binding protein UgpC (366 aa).

An ABC transporter domain is found at 4-235; the sequence is LSLRNVQKTY…PASTFVAGFI (232 aa). 37-44 contacts ATP; the sequence is GPSGCGKS.

It belongs to the ABC transporter superfamily. sn-glycerol-3-phosphate importer (TC 3.A.1.1.3) family. The complex is composed of two ATP-binding proteins (UgpC), two transmembrane proteins (UgpA and UgpE) and a solute-binding protein (UgpB).

The protein localises to the cell inner membrane. It catalyses the reaction sn-glycerol 3-phosphate(out) + ATP + H2O = sn-glycerol 3-phosphate(in) + ADP + phosphate + H(+). In terms of biological role, part of the ABC transporter complex UgpBAEC involved in sn-glycerol-3-phosphate (G3P) import. Responsible for energy coupling to the transport system. The protein is sn-glycerol-3-phosphate import ATP-binding protein UgpC of Cupriavidus necator (strain ATCC 17699 / DSM 428 / KCTC 22496 / NCIMB 10442 / H16 / Stanier 337) (Ralstonia eutropha).